The primary structure comprises 273 residues: Cytoplasmic phosphatidylinositol transfer protein 1 (273 aa).

Residues glutamine 244–aspartate 273 are disordered.

Belongs to the PtdIns transfer protein family. PI transfer class IIB subfamily.

Functionally, phosphatidylinositol transfer proteins mediate the monomeric transport of lipids by shielding a lipid from the aqueous environment and binding the lipid in a hydrophobic cavity. This chain is Cytoplasmic phosphatidylinositol transfer protein 1 (rdgBbeta), found in Drosophila melanogaster (Fruit fly).